Here is a 539-residue protein sequence, read N- to C-terminus: Gamma-2-syntrophin (539 aa).

One can recognise a PDZ domain in the interval 73-156; that stretch reads TVTLRRQPVG…DVTITVEYLR (84 aa). One can recognise a PH domain in the interval 296-421; sequence QVVHMGWVNE…WEKAFQRATF (126 aa).

This sequence belongs to the syntrophin family. As to quaternary structure, interacts with the dystrophin protein DMD and related proteins DTNA and DTNB.

It is found in the cell membrane. It localises to the sarcolemma. Its subcellular location is the cytoplasm. The protein resides in the cytoskeleton. In terms of biological role, adapter protein that binds to and probably organizes the subcellular localization of a variety of proteins. May link various receptors to the actin cytoskeleton and the dystrophin glycoprotein complex. This Mus musculus (Mouse) protein is Gamma-2-syntrophin (Sntg2).